The primary structure comprises 132 residues: 3-aminoacrylate deaminase RutC (132 aa).

It belongs to the RutC family.

It carries out the reaction (Z)-3-aminoacrylate + H2O + H(+) = 3-oxopropanoate + NH4(+). Its function is as follows. Involved in pyrimidine catabolism. Catalyzes the deamination of 3-aminoacrylate to malonic semialdehyde, a reaction that can also occur spontaneously. RutC may facilitate the reaction and modulate the metabolic fitness, rather than catalyzing essential functions. This is 3-aminoacrylate deaminase RutC from Cronobacter turicensis (strain DSM 18703 / CCUG 55852 / LMG 23827 / z3032).